Here is a 272-residue protein sequence, read N- to C-terminus: Imidazole glycerol phosphate synthase subunit HisF (272 aa).

Catalysis depends on residues aspartate 11 and aspartate 130.

Belongs to the HisA/HisF family. As to quaternary structure, heterodimer of HisH and HisF.

It is found in the cytoplasm. It carries out the reaction 5-[(5-phospho-1-deoxy-D-ribulos-1-ylimino)methylamino]-1-(5-phospho-beta-D-ribosyl)imidazole-4-carboxamide + L-glutamine = D-erythro-1-(imidazol-4-yl)glycerol 3-phosphate + 5-amino-1-(5-phospho-beta-D-ribosyl)imidazole-4-carboxamide + L-glutamate + H(+). It participates in amino-acid biosynthesis; L-histidine biosynthesis; L-histidine from 5-phospho-alpha-D-ribose 1-diphosphate: step 5/9. Functionally, IGPS catalyzes the conversion of PRFAR and glutamine to IGP, AICAR and glutamate. The HisF subunit catalyzes the cyclization activity that produces IGP and AICAR from PRFAR using the ammonia provided by the HisH subunit. In Methanococcus maripaludis (strain C7 / ATCC BAA-1331), this protein is Imidazole glycerol phosphate synthase subunit HisF.